We begin with the raw amino-acid sequence, 89 residues long: Small ribosomal subunit protein uS15 (89 aa).

It belongs to the universal ribosomal protein uS15 family. As to quaternary structure, part of the 30S ribosomal subunit. Forms a bridge to the 50S subunit in the 70S ribosome, contacting the 23S rRNA.

In terms of biological role, one of the primary rRNA binding proteins, it binds directly to 16S rRNA where it helps nucleate assembly of the platform of the 30S subunit by binding and bridging several RNA helices of the 16S rRNA. Forms an intersubunit bridge (bridge B4) with the 23S rRNA of the 50S subunit in the ribosome. In Cereibacter sphaeroides (strain ATCC 17023 / DSM 158 / JCM 6121 / CCUG 31486 / LMG 2827 / NBRC 12203 / NCIMB 8253 / ATH 2.4.1.) (Rhodobacter sphaeroides), this protein is Small ribosomal subunit protein uS15.